A 426-amino-acid chain; its full sequence is Serine--tRNA ligase (426 aa).

Residue 233–235 (TSE) coordinates L-serine. Residue 264–266 (RSE) coordinates ATP. L-serine is bound at residue E287. Position 351–354 (351–354 (EISS)) interacts with ATP. S387 contacts L-serine.

It belongs to the class-II aminoacyl-tRNA synthetase family. Type-1 seryl-tRNA synthetase subfamily. As to quaternary structure, homodimer. The tRNA molecule binds across the dimer.

Its subcellular location is the cytoplasm. It catalyses the reaction tRNA(Ser) + L-serine + ATP = L-seryl-tRNA(Ser) + AMP + diphosphate + H(+). The enzyme catalyses tRNA(Sec) + L-serine + ATP = L-seryl-tRNA(Sec) + AMP + diphosphate + H(+). Its pathway is aminoacyl-tRNA biosynthesis; selenocysteinyl-tRNA(Sec) biosynthesis; L-seryl-tRNA(Sec) from L-serine and tRNA(Sec): step 1/1. Catalyzes the attachment of serine to tRNA(Ser). Is also able to aminoacylate tRNA(Sec) with serine, to form the misacylated tRNA L-seryl-tRNA(Sec), which will be further converted into selenocysteinyl-tRNA(Sec). The polypeptide is Serine--tRNA ligase (Xylella fastidiosa (strain 9a5c)).